The sequence spans 504 residues: Transcriptional coactivator YAP1 (504 aa).

2 stretches are compositionally biased toward pro residues: residues 1-12 (MDPGQQPPPQPA) and 20-36 (PSQPPQGQGPPSGPGQP). Residues 1 to 59 (MDPGQQPPPQPAPQGQGQPPSQPPQGQGPPSGPGQPAPAATQAAPQAPPAGHQIVHVRG) are disordered. The segment covering 37 to 51 (APAATQAAPQAPPAG) has biased composition (low complexity). At S61 the chain carries Phosphoserine; by LATS1 and LATS2. T63 carries the post-translational modification Phosphothreonine. Residues 86 to 100 (MRLRKLPDSFFKPPE) are a coiled coil. Position 90 is an N6-lactoyllysine (K90). Positions 91-114 (LPDSFFKPPEPKSHSRQASTDAGT) are disordered. S105 is modified (phosphoserine). At S109 the chain carries Phosphoserine; by LATS1 and LATS2. A Phosphothreonine modification is found at T110. A Phosphothreonine; by MAPK8 and MAPK9 modification is found at T119. Residue S127 is modified to Phosphoserine; by LATS1 and LATS2. A phosphoserine mark is found at S128 and S131. Positions 133 to 158 (QLGAVSPGTLTPTGVVSGPAATPTAQ) are disordered. S138 is modified (phosphoserine; by MAPK8 and MAPK9). Position 154 is a phosphothreonine; by MAPK8 and MAPK9 (T154). S164 carries the post-translational modification Phosphoserine; by LATS1 and LATS2. WW domains are found at residues 171–204 (VPLPAGWEMAKTSSGQRYFLNHIDQTTTWQDPRK) and 230–263 (GPLPDGWEQAMTQDGEIYYINHKNKTTSWLDPRL). Residues S274 and S289 each carry the phosphoserine modification. 2 disordered regions span residues 275 to 309 (QSAPVKQPPPLAPQSPQGGVMGGSNSNQQQQMRLQ) and 355 to 407 (LEQD…MSSY). Positions 291–504 (QGGVMGGSNS…LDKESFLTWL (214 aa)) are transactivation domain. Residues 298–359 (SNSNQQQQMR…SQLPTLEQDG (62 aa)) adopt a coiled-coil conformation. The span at 355–391 (LEQDGGTQNPVSSPGMSQELRTMTTNSSDPFLNSGTY) shows a compositional bias: polar residues. S367 is modified (phosphoserine; by MAPK8 and MAPK9). Residues S371, S381, S382, and S388 each carry the phosphoserine modification. Position 397 is a phosphoserine; by LATS1 and LATS2 (S397). A phosphoserine; by CK1 mark is found at S400 and S403. Y407 carries the phosphotyrosine; by ABL1 modification. T412 is modified (phosphothreonine; by MAPK8 and MAPK9).

This sequence belongs to the YAP1 family. As to quaternary structure, part of a complex when phosphorylated that contains DSG3, PKP1, YAP1 and YWHAG; the complex is required for localization of DSG3 and YAP1 to the cell membrane in keratinocytes. Binds to the SH3 domain of the YES kinase. Binds to WBP1 and WBP2. Binds, in vitro, through the WW1 domain, to neural isoforms of ENAH that contain the PPSY motif. The phosphorylated form interacts with YWHAB. Interacts (via WW domains) with LATS1 (via PPxY motif 2). Interacts with LATS2. Interacts with TEAD1, TEAD2, TEAD3 and TEAD4. Interacts with TP73. Interacts with RUNX1. Interacts with HCK. Interacts (via WW domains) with PTPN14 (via PPxY motif 2); this interaction leads to the cytoplasmic sequestration of YAP1 and inhibits its transcriptional coactivator activity. Interacts (when phosphorylated at Ser-127) with SMAD2, SMAD3 and WWTR1. Interacts with PRRG2 (via cytoplasmic domain). Interacts (via WW domains) with PRRG4 (via cytoplasmic domain). Interacts (phosphorylated) with CLDN18; the interaction sequesters YAP1 away from the nucleus and thereby restricts transcription of YAP1 target genes. Interacts with SMAD1. Interacts with AMOTL2, the interaction is required for ubiquitination of AMOTL2 and localization of YAP1 to tight junctions. Interacts with AMOT isoform 1; the interaction facilitates translocation of YAP1 to the cytoplasm and tight junctions. Interacts (via WW domain 1) with isoform 3 of ERBB4 (via PPxY motif 2). Post-translationally, phosphorylated by LATS1 and LATS2; leading to cytoplasmic translocation and inactivation. Phosphorylated by ABL1; leading to YAP1 stabilization, enhanced interaction with TP73 and recruitment onto proapoptotic genes; in response to DNA damage. Phosphorylation at Ser-400 and Ser-403 by CK1 is triggered by previous phosphorylation at Ser-397 by LATS proteins and leads to YAP1 ubiquitination by SCF(beta-TRCP) E3 ubiquitin ligase and subsequent degradation. Phosphorylated at Thr-119, Ser-138, Thr-154, Ser-367 and Thr-412 by MAPK8/JNK1 and MAPK9/JNK2, which is required for the regulation of apoptosis by YAP1. Phosphorylated in the nucleus by PRP4K; phosphorylation leads to nuclear exclusion. In terms of processing, lactylation by AARS1 promotes nuclear localization and stabilization of YAP1, leading to increased Hippo signaling pathway. Delactylated by SIRT1. Ubiquitinated by SCF(beta-TRCP) E3 ubiquitin ligase. In terms of tissue distribution, increased expression seen in some liver and prostate cancers. Isoforms lacking the transactivation domain found in striatal neurons of patients with Huntington disease (at protein level).

It is found in the cytoplasm. The protein resides in the nucleus. Its subcellular location is the cell junction. The protein localises to the tight junction. It localises to the cell membrane. In terms of biological role, transcriptional regulator with dual roles as a coactivator and corepressor. Critical downstream regulatory target in the Hippo signaling pathway, crucial for organ size control and tumor suppression by restricting proliferation and promoting apoptosis. The Hippo signaling pathway core involves a kinase cascade featuring STK3/MST2 and STK4/MST1, along with its regulatory partner SAV1, which phosphorylates and activates LATS1/2 in complex with their regulatory protein, MOB1. This activation leads to the phosphorylation and inactivation of the YAP1 oncoprotein and WWTR1/TAZ. Phosphorylation of YAP1 by LATS1/2 prevents its nuclear translocation, thereby regulating the expression of its target genes. The transcriptional regulation of gene expression requires TEAD transcription factors and modulates cell growth, anchorage-independent growth, and induction of epithelial-mesenchymal transition (EMT). Plays a key role in tissue tension and 3D tissue shape by regulating the cortical actomyosin network, acting via ARHGAP18, a Rho GTPase activating protein that suppresses F-actin polymerization. It also suppresses ciliogenesis by acting as a transcriptional corepressor of TEAD4 target genes AURKA and PLK1. In conjunction with WWTR1, regulates TGFB1-dependent SMAD2 and SMAD3 nuclear accumulation. Synergizes with WBP2 to enhance PGR activity. Activates the C-terminal fragment (CTF) of ERBB4 (isoform 3). The chain is Transcriptional coactivator YAP1 from Homo sapiens (Human).